The primary structure comprises 282 residues: Large ribosomal subunit protein uL2c (282 aa).

The segment at 230 to 261 (SAQNAVDHPHGGGEGKAPIGRIPSTPWGKPAL) is disordered.

This sequence belongs to the universal ribosomal protein uL2 family. In terms of assembly, part of the 50S ribosomal subunit.

It localises to the plastid. The polypeptide is Large ribosomal subunit protein uL2c (rpl2) (Helicosporidium sp. subsp. Simulium jonesii (Green alga)).